We begin with the raw amino-acid sequence, 406 residues long: Sorting nexin-6 (406 aa).

An N-acetylmethionine modification is found at Met-1. At Met-2 the chain carries N-acetylmethionine; in Sorting nexin-6, N-terminally processed. The interval Met-2–Asn-179 is interaction with PIM1. The region spanning Leu-26–Leu-173 is the PX domain. A 1,2-diacyl-sn-glycero-3-phospho-(1D-myo-inositol-4,5-bisphosphate) is bound by residues Ser-41 to Lys-47, Phe-100 to Lys-106, and Glu-114 to Met-117. A phosphoserine mark is found at Ser-116 and Ser-194. A membrane-binding amphipathic helix region spans residues Glu-182–Ile-199. Positions Val-203–Thr-406 constitute a BAR domain.

Belongs to the sorting nexin family. Forms heterodimers with BAR domain-containing sorting nexins SNX1 and SNX2. The heterodimers are proposed to self-assemble into helical arrays on the membrane to stabilize and expand local membrane curvature underlying endosomal tubule formation. Thought to be a component of the originally described retromer complex (also called SNX-BAR retromer) which is a pentamer containing the heterotrimeric retromer cargo-selective complex (CSC), also described as vacuolar protein sorting subcomplex (VPS), and a heterodimeric membrane-deforming subcomplex formed between SNX1 or SNX2 and SNX5 or SNX6 (also called SNX-BAR subcomplex); the respective CSC and SNX-BAR subcomplexes associate with low affinity. Interacts with SNX1, SNX2, VPS26A, VPS29, VPS35, TGFB receptors, BACE1, BRMS1, PIP5K1C. Interacts with DCTN1; the association with DCTN1 is involved in movement of retromer-c ontaining vesicles toward the TGN. Interacts with PIM1; translocating SNX6 to the nucleus. Interacts with CDKN1B and GIT1. In terms of processing, in vitro phosphorylated by PIM1; not affecting PIM1-dependent nuclear translocation.

The protein resides in the early endosome membrane. It is found in the cytoplasmic vesicle. Its subcellular location is the cytoplasm. The protein localises to the nucleus. Its function is as follows. Involved in several stages of intracellular trafficking. Interacts with membranes phosphatidylinositol 3,4-bisphosphate and/or phosphatidylinositol 4,5-bisphosphate. Acts in part as component of the retromer membrane-deforming SNX-BAR subcomplex. The SNX-BAR retromer mediates retrograde transport of cargo proteins from endosomes to the trans-Golgi network (TGN) and is involved in endosome-to-plasma membrane transport for cargo protein recycling. The SNX-BAR subcomplex functions to deform the donor membrane into a tubular profile called endosome-to-TGN transport carrier (ETC). Does not have in vitro vesicle-to-membrane remodeling activity. Involved in retrograde endosome-to-TGN transport of lysosomal enzyme receptor IGF2R. May function as link between transport vesicles and dynactin. Negatively regulates retrograde transport of BACE1 from the cell surface to the trans-Golgi network. Involved in E-cadherin sorting and degradation; inhibits PIP5K1C-mediated E-cadherin degradation. In association with GIT1 involved in EGFR degradation. Promotes lysosomal degradation of CDKN1B. May contribute to transcription regulation. This Mus musculus (Mouse) protein is Sorting nexin-6 (Snx6).